Consider the following 227-residue polypeptide: PKHD-type hydroxylase BTH_II1201 (227 aa).

The 101-residue stretch at 78–178 (KVFPPLFNRY…RVASFFWIQS (101 aa)) folds into the Fe2OG dioxygenase domain. Fe cation is bound by residues His96, Asp98, and His159. Residue Arg169 participates in 2-oxoglutarate binding.

Fe(2+) is required as a cofactor. Requires L-ascorbate as cofactor.

This chain is PKHD-type hydroxylase BTH_II1201, found in Burkholderia thailandensis (strain ATCC 700388 / DSM 13276 / CCUG 48851 / CIP 106301 / E264).